Reading from the N-terminus, the 217-residue chain is uncharacterized protein (217 aa).

The chain crosses the membrane as a helical span at residues V26 to A48.

The protein localises to the membrane. This is an uncharacterized protein from Archaeoglobus fulgidus (strain ATCC 49558 / DSM 4304 / JCM 9628 / NBRC 100126 / VC-16).